Reading from the N-terminus, the 493-residue chain is Amphoterin-induced protein 1 (493 aa).

Positions 1–27 are cleaved as a signal peptide; it reads MHPHRDPRGLWLLLPSLSLLLFEVARA. The 34-residue stretch at 28-61 folds into the LRRNT domain; the sequence is GRAVVSCPAACLCASNILSCSKQQLPNVPHSLPS. Residues 28–372 are Extracellular-facing; the sequence is GRAVVSCPAA…LHGHHDTLNT (345 aa). 2 disulfide bridges follow: cysteine 34–cysteine 40 and cysteine 38–cysteine 47. LRR repeat units lie at residues 62–83, 87–108, 111–132, 135–156, 159–179, and 186–206; these read YTAL…WTPT, QLHS…AFSP, NLRY…LFSD, VLEV…AFDD, QLQK…ELVK, and KLTL…PDLQ. Asparagine 72 carries N-linked (GlcNAc...) asparagine glycosylation. In terms of domain architecture, LRRCT spans 221 to 272; sequence NPLNCDCELYQLFSHWQYRQLSSVMDFQEDLYCMNSKKLHNVFNLSFLNCGE. 3 disulfide bridges follow: cysteine 225–cysteine 253, cysteine 227–cysteine 270, and cysteine 290–cysteine 341. N-linked (GlcNAc...) asparagine glycans are attached at residues asparagine 264, asparagine 315, asparagine 349, and asparagine 360. In terms of domain architecture, Ig-like C2-type spans 269 to 353; the sequence is NCGEYKERAW…MGETFNETLS (85 aa). Residues 373 to 393 traverse the membrane as a helical segment; that stretch reads AYTTLVGCILSVVLVLIYLYL. Residues 394-493 lie on the Cytoplasmic side of the membrane; it reads TPCRCWCRGV…SVFSDTPIVV (100 aa). Residues 405 to 493 are disordered; the sequence is KPSSHQGDSL…SVFSDTPIVV (89 aa). A compositionally biased stretch (polar residues) spans 408 to 424; it reads SHQGDSLSSSMLSTTPN. Residues 431–442 are compositionally biased toward basic and acidic residues; that stretch reads GDKDDGFDRRVA. Serine 477 and serine 481 each carry phosphoserine.

Belongs to the immunoglobulin superfamily. AMIGO family. As to quaternary structure, homodimer, and heterodimer with AMIGO2 and AMIGO3. Interacts with KCNB1.

It is found in the cell membrane. Its subcellular location is the perikaryon. The protein localises to the cell projection. The protein resides in the dendrite. It localises to the axon. Functionally, promotes growth and fasciculation of neurites from cultured hippocampal neurons. May be involved in fasciculation as well as myelination of developing neural axons. May have a role in regeneration as well as neural plasticity in the adult nervous system. May mediate homophilic as well as heterophilic cell-cell interaction and contribute to signal transduction through its intracellular domain. Assembled with KCNB1 modulates the gating characteristics of the delayed rectifier voltage-dependent potassium channel KCNB1. The sequence is that of Amphoterin-induced protein 1 from Homo sapiens (Human).